Consider the following 363-residue polypeptide: Protein-glutamate methylesterase/protein-glutamine glutaminase 1 (363 aa).

The 118-residue stretch at 7–124 (KVLIVDDSAL…SRGMQEYARE (118 aa)) folds into the Response regulatory domain. Residue Asp58 is modified to 4-aspartylphosphate. The 193-residue stretch at 164–356 (FSSTEKIIVI…RRLFGWLESQ (193 aa)) folds into the CheB-type methylesterase domain. Active-site residues include Ser176, His202, and Asp298.

It belongs to the CheB family. Post-translationally, phosphorylated by CheA. Phosphorylation of the N-terminal regulatory domain activates the methylesterase activity.

It localises to the cytoplasm. It carries out the reaction [protein]-L-glutamate 5-O-methyl ester + H2O = L-glutamyl-[protein] + methanol + H(+). The enzyme catalyses L-glutaminyl-[protein] + H2O = L-glutamyl-[protein] + NH4(+). In terms of biological role, involved in chemotaxis. Part of a chemotaxis signal transduction system that modulates chemotaxis in response to various stimuli. Catalyzes the demethylation of specific methylglutamate residues introduced into the chemoreceptors (methyl-accepting chemotaxis proteins or MCP) by CheR. Also mediates the irreversible deamidation of specific glutamine residues to glutamic acid. In Geobacter metallireducens (strain ATCC 53774 / DSM 7210 / GS-15), this protein is Protein-glutamate methylesterase/protein-glutamine glutaminase 1.